The chain runs to 538 residues: Phospho-2-dehydro-3-deoxyheptonate aldolase 1, chloroplastic (538 aa).

The N-terminal 74 residues, 1–74, are a transit peptide targeting the chloroplast; sequence MALSSTSTTN…KPSKSSPPAA (74 aa). Residues 55–82 are disordered; the sequence is DSNKIPIVSDKPSKSSPPAATATTAPAP. The span at 68–82 shows a compositional bias: low complexity; it reads KSSPPAATATTAPAP. Position 75 is a blocked amino end (Thr) (threonine 75).

Belongs to the class-II DAHP synthase family.

It localises to the plastid. The protein localises to the chloroplast. The catalysed reaction is D-erythrose 4-phosphate + phosphoenolpyruvate + H2O = 7-phospho-2-dehydro-3-deoxy-D-arabino-heptonate + phosphate. The protein operates within metabolic intermediate biosynthesis; chorismate biosynthesis; chorismate from D-erythrose 4-phosphate and phosphoenolpyruvate: step 1/7. Activation by tryptophan (a hysteretic factor). This Solanum tuberosum (Potato) protein is Phospho-2-dehydro-3-deoxyheptonate aldolase 1, chloroplastic (SHKA).